Consider the following 345-residue polypeptide: tRNA N6-adenosine threonylcarbamoyltransferase (345 aa).

Fe cation contacts are provided by histidine 111 and histidine 115. Residues leucine 136–glycine 140, aspartate 169, glycine 182, and asparagine 279 each bind substrate. Fe cation is bound at residue aspartate 307.

Belongs to the KAE1 / TsaD family. It depends on Fe(2+) as a cofactor.

The protein localises to the cytoplasm. The enzyme catalyses L-threonylcarbamoyladenylate + adenosine(37) in tRNA = N(6)-L-threonylcarbamoyladenosine(37) in tRNA + AMP + H(+). Its function is as follows. Required for the formation of a threonylcarbamoyl group on adenosine at position 37 (t(6)A37) in tRNAs that read codons beginning with adenine. Is involved in the transfer of the threonylcarbamoyl moiety of threonylcarbamoyl-AMP (TC-AMP) to the N6 group of A37, together with TsaE and TsaB. TsaD likely plays a direct catalytic role in this reaction. The sequence is that of tRNA N6-adenosine threonylcarbamoyltransferase from Actinobacillus succinogenes (strain ATCC 55618 / DSM 22257 / CCUG 43843 / 130Z).